The following is a 229-amino-acid chain: Flagellar L-ring protein (229 aa).

Residues 1–23 form the signal peptide; sequence MNPLTRVALAVAAFAALVLALSA. A lipid anchor (N-palmitoyl cysteine) is attached at Cys-24. Cys-24 is lipidated: S-diacylglycerol cysteine.

It belongs to the FlgH family. In terms of assembly, the basal body constitutes a major portion of the flagellar organelle and consists of four rings (L,P,S, and M) mounted on a central rod.

It is found in the cell outer membrane. Its subcellular location is the bacterial flagellum basal body. Assembles around the rod to form the L-ring and probably protects the motor/basal body from shearing forces during rotation. The protein is Flagellar L-ring protein of Anaeromyxobacter sp. (strain K).